Consider the following 203-residue polypeptide: Early nodulin-like protein 9 (203 aa).

The N-terminal stretch at 1-27 (MARNLKSMMLCGFGLLCFLMIVDRAYA) is a signal peptide. The Phytocyanin domain occupies 28 to 130 (REFTVGGATG…NEKLVVIVMA (103 aa)). The cysteines at positions 84 and 118 are disulfide-linked. An N-linked (GlcNAc...) asparagine glycan is attached at Asn103. Residues 134-181 (GNKNTASSPPSPAPAPSGESAPSPPVSGTFEMTPAPTPTTSEDTPNSA) form a disordered region. The GPI-anchor amidated serine moiety is linked to residue Ser180. A propeptide spans 181–203 (AASSLSFVAALLGAALASTLFLH) (removed in mature form).

This sequence belongs to the early nodulin-like (ENODL) family. Specifically observed at the plasma membrane of sieve elements in vascular tissues of leaves, stems, roots, flowers and reproductive organs. Absent from companion cells.

Its subcellular location is the cell membrane. May act as a carbohydrate transporter. Mainly required for reproductive functions. The chain is Early nodulin-like protein 9 from Arabidopsis thaliana (Mouse-ear cress).